Consider the following 260-residue polypeptide: Carbonic anhydrase 2 (260 aa).

N-acetylserine is present on Ser2. Residue Ser2 is modified to Phosphoserine. The region spanning 3 to 259 (HHWGYGKHNG…LKNRQIKASF (257 aa)) is the Alpha-carbonic anhydrase domain. Catalysis depends on His64, which acts as the Proton donor/acceptor. Positions 94, 96, and 119 each coordinate Zn(2+). Ser165 and Ser172 each carry phosphoserine. 198–199 (TT) contacts substrate.

The protein belongs to the alpha-carbonic anhydrase family. Interacts with SLC4A4. Interaction with SLC4A7 regulates SLC4A7 transporter activity. Interacts with SLC26A6 isoform 4 (via C-terminus cytoplasmic domain). It depends on Zn(2+) as a cofactor. Requires Co(2+) as cofactor.

It localises to the cytoplasm. The protein localises to the cell membrane. The catalysed reaction is hydrogencarbonate + H(+) = CO2 + H2O. It carries out the reaction urea = cyanamide + H2O. With respect to regulation, activated by X-ray, histamine, L-adrenaline, L- and D-phenylalanine, L- and D-histidine, L-His-OMe and beta-Ala-His (carnosine). Competitively inhibited by saccharin, thioxolone, coumarins, 667-coumate, celecoxib (Celebrex), valdecoxib (Bextra), SC-125, SC-560, diclofenac, acetate, azide, bromide, sulfonamide derivatives such as acetazolamide (AZA), methazolamide (MZA), ethoxzolamide (EZA), dichlorophenamide (DCP), brinzolamide, dansylamide, thiabendazole-5-sulfonamide, trifluoromethane sulfonamide and N-hydroxysulfamide, fructose-based sugar sulfamate RWJ-37497, and Foscarnet (phosphonoformate trisodium salt). Repressed strongly by hydrogen sulfide(HS) and weakly by nitrate (NO(3)). Esterase activity weakly reduced by cyanamide. N-hydroxyurea interferes with zinc binding and inhibit activity. In terms of biological role, catalyzes the reversible hydration of carbon dioxide. Can also hydrate cyanamide to urea. Stimulates the chloride-bicarbonate exchange activity of SLC26A6. Essential for bone resorption and osteoclast differentiation. Involved in the regulation of fluid secretion into the anterior chamber of the eye. Contributes to intracellular pH regulation in the duodenal upper villous epithelium during proton-coupled peptide absorption. The sequence is that of Carbonic anhydrase 2 (CA2) from Homo sapiens (Human).